Consider the following 606-residue polypeptide: MACPF domain-containing protein At4g24290 (606 aa).

The MACPF domain occupies 1–332 (MALRLPASKA…PPIEELHQFL (332 aa)).

The protein belongs to the complement C6/C7/C8/C9 (TC 1.C.39) family.

Negatively controls the salicylic acid (SA)-mediated pathway of programmed cell death in plant immunity. The protein is MACPF domain-containing protein At4g24290 of Arabidopsis thaliana (Mouse-ear cress).